Here is a 134-residue protein sequence, read N- to C-terminus: Small ribosomal subunit protein uS8c (134 aa).

It belongs to the universal ribosomal protein uS8 family. Part of the 30S ribosomal subunit.

The protein localises to the plastid. In terms of biological role, one of the primary rRNA binding proteins, it binds directly to 16S rRNA central domain where it helps coordinate assembly of the platform of the 30S subunit. This chain is Small ribosomal subunit protein uS8c (rps8), found in Epifagus virginiana (Beechdrops).